Here is a 166-residue protein sequence, read N- to C-terminus: Urease accessory protein UreE 2 (166 aa).

Residues Gln133 to Pro156 are disordered.

This sequence belongs to the UreE family.

It localises to the cytoplasm. Involved in urease metallocenter assembly. Binds nickel. Probably functions as a nickel donor during metallocenter assembly. This chain is Urease accessory protein UreE 2, found in Pseudomonas syringae pv. tomato (strain ATCC BAA-871 / DC3000).